Consider the following 1529-residue polypeptide: Myosin-11 (1529 aa).

In terms of domain architecture, Myosin N-terminal SH3-like spans 11-60; it reads IVGSHVWIEDSDVAWIDGLVEKINGQDVEVQATNGKKITAKLSKIYPKDM. The region spanning 65-735 is the Myosin motor domain; sequence GGVDDMTKLS…QMAELDARRT (671 aa). ATP contacts are provided by residues 159–166 and 212–220; these read GESGAGKT and NNNSSRFGK. Actin-binding stretches follow at residues 498-532, 534-557, 592-616, and 616-638; these read LIEK…YQTF, THKR…AGEV, FPPL…KLQL, and LQQL…KPNN. IQ domains follow at residues 738-767, 761-790, 786-815, 809-838, 834-863, and 857-886; these read LSAA…ATIS, LRKA…QAAA, RQAA…AALV, LHVA…TKAA, QTKA…GVIL, and LKKG…ASRE. Residues 887–1059 adopt a coiled-coil conformation; it reads TGALKEAKDM…VLRQQAVSIA (173 aa). The segment covering 993-1027 has biased composition (basic and acidic residues); sequence EQEKQRADDATRKFDEAQESSEDRKKKLEDTEKKA. Disordered stretches follow at residues 993–1031 and 1096–1115; these read EQEK…QQLQ and INRR…LNEK. Residues 1163–1472 form the Dilute domain; it reads DRIIQTIGQA…IANMRVLMTE (310 aa).

Belongs to the TRAFAC class myosin-kinesin ATPase superfamily. Myosin family. Plant myosin class XI subfamily. Homodimer.

Its subcellular location is the cytoplasm. Functionally, myosin heavy chain that is required for the cell cycle-regulated transport of various organelles and proteins for their segregation. Functions by binding with its tail domain to receptor proteins on organelles and exerting force with its N-terminal motor domain against actin filaments, thereby transporting its cargo along polarized actin cables. Involved in trafficking of Golgi stacks, mitochondria and peroxisomes. The polypeptide is Myosin-11 (XI-E) (Arabidopsis thaliana (Mouse-ear cress)).